A 49-amino-acid polypeptide reads, in one-letter code: Zinc-containing ferredoxin (49 aa).

Positions 1–36 are N-terminal extension; that stretch reads GIDPNYRTSRQVVGEHQGHKVYGPVDPPKVLGIHGT. Zn(2+) contacts are provided by histidine 16 and histidine 19. The residue at position 29 (lysine 29) is an N6-methyllysine. Histidine 34 is a binding site for Zn(2+). A ferredoxin region spans residues 37 to 49; that stretch reads IVXVDFDLCIADG. Residue cysteine 45 participates in [3Fe-4S] cluster binding.

[3Fe-4S] cluster serves as cofactor. Requires [4Fe-4S] cluster as cofactor. It depends on Zn(2+) as a cofactor.

Its function is as follows. Ferredoxins are iron-sulfur proteins that transfer electrons in a wide variety of metabolic reactions. This Acidianus infernus protein is Zinc-containing ferredoxin (zfx).